The following is a 986-amino-acid chain: Vacuolar membrane protease (986 aa).

Topologically, residues 1–20 are cytoplasmic; the sequence is MATPRAQKFNPIAFTPGPVT. The chain crosses the membrane as a helical span at residues 21 to 41; the sequence is LITTIVYLALLIPILVISLVV. At 42 to 392 the chain is on the vacuolar side; that stretch reads PPAPETSPEG…AFAVFRLHTL (351 aa). N-linked (GlcNAc...) asparagine glycosylation is found at N53, N116, and N119. Zn(2+) contacts are provided by H175 and D187. E221 (proton acceptor) is an active-site residue. Zn(2+) is bound at residue E222. A glycan (N-linked (GlcNAc...) asparagine) is linked at N238. Zn(2+)-binding residues include E247 and H320. Residues 393–413 traverse the membrane as a helical segment; sequence FALSVTLLIVAPLVIFITAIV. The Cytoplasmic segment spans residues 414–447; sequence LSKTDRMYLFSMSKSLGGTDERVSLRGLRGLFRT. Residues 448-468 traverse the membrane as a helical segment; sequence PIILAVATVIPIGLAYLLEKV. Residues 469-477 are Vacuolar-facing; sequence NPYIVHSSQ. The chain crosses the membrane as a helical span at residues 478-498; sequence FSVWSMMISVWIFLAWFLACA. Topologically, residues 499–509 are cytoplasmic; that stretch reads ADFFRPSALHR. The helical transmembrane segment at 510–530 threads the bilayer; that stretch reads AYSYTWIFIATWVMLVINTVY. At 531–534 the chain is on the vacuolar side; sequence ANQK. The chain crosses the membrane as a helical span at residues 535 to 555; it reads GIAAGYFVFFYFSGSFLATWV. Topologically, residues 556–665 are cytoplasmic; it reads SYLELFALPR…WSWTLPRWTW (110 aa). A disordered region spans residues 595–620; the sequence is ELPSDTGPHAEYPGDADETDPTESTS. The helical transmembrane segment at 666 to 686 threads the bilayer; that stretch reads VLQLLLLAPIVLILVGQLALF. Residues 687–702 are Vacuolar-facing; that stretch reads LTTSMSQVGSDGVSTF. A helical membrane pass occupies residues 703-723; the sequence is IVYLACAVFTTLLFAPLFPFI. At 724-729 the chain is on the cytoplasmic side; that stretch reads HRFTYH. The helical transmembrane segment at 730–750 threads the bilayer; it reads IPTFLFLVFVGTLIYNLVAFP. Topologically, residues 751–986 are vacuolar; it reads FSPANRLKMF…VEASHGITIQ (236 aa). Residues N797, N840, and N948 are each glycosylated (N-linked (GlcNAc...) asparagine).

Belongs to the peptidase M28 family. The cofactor is Zn(2+).

The protein localises to the vacuole membrane. In terms of biological role, may be involved in vacuolar sorting and osmoregulation. In Blastomyces gilchristii (strain SLH14081) (Blastomyces dermatitidis), this protein is Vacuolar membrane protease.